Here is a 60-residue protein sequence, read N- to C-terminus: Large ribosomal subunit protein bL32 (60 aa).

Residues 1–60 (MAVQQNKKSPSKRGMHRSHNALTVPGIAVEPTTGETHLRHHISPNGFYRGRQVLKNKSEA) form a disordered region. Residues 9 to 19 (SPSKRGMHRSH) show a composition bias toward basic residues.

This sequence belongs to the bacterial ribosomal protein bL32 family.

This chain is Large ribosomal subunit protein bL32, found in Paracidovorax citrulli (strain AAC00-1) (Acidovorax citrulli).